The following is a 256-amino-acid chain: Acetyl-coenzyme A carboxylase carboxyl transferase subunit alpha (256 aa).

Residues 1–236 (MTDVSRVLKE…KANLIEQITS (236 aa)) form the CoA carboxyltransferase C-terminal domain.

It belongs to the AccA family. Acetyl-CoA carboxylase is a heterohexamer composed of biotin carboxyl carrier protein (AccB), biotin carboxylase (AccC) and two subunits each of ACCase subunit alpha (AccA) and ACCase subunit beta (AccD).

The protein localises to the cytoplasm. It carries out the reaction N(6)-carboxybiotinyl-L-lysyl-[protein] + acetyl-CoA = N(6)-biotinyl-L-lysyl-[protein] + malonyl-CoA. It functions in the pathway lipid metabolism; malonyl-CoA biosynthesis; malonyl-CoA from acetyl-CoA: step 1/1. Functionally, component of the acetyl coenzyme A carboxylase (ACC) complex. First, biotin carboxylase catalyzes the carboxylation of biotin on its carrier protein (BCCP) and then the CO(2) group is transferred by the carboxyltransferase to acetyl-CoA to form malonyl-CoA. The protein is Acetyl-coenzyme A carboxylase carboxyl transferase subunit alpha of Streptococcus pyogenes serotype M2 (strain MGAS10270).